Consider the following 117-residue polypeptide: Galanin peptides (117 aa).

A signal peptide spans 1-19; that stretch reads MQRCAGFLFLSLILCAALS. Residues 20–30 constitute a propeptide that is removed on maturation; that stretch reads ETFGLVLSAKE. Thr61 bears the Threonine amide mark.

It belongs to the galanin family.

The protein localises to the secreted. In terms of biological role, endocrine hormone of the central and peripheral nervous systems that binds and activates the G protein-coupled receptors GALR1, GALR2, and GALR3. This small neuropeptide may regulate diverse physiologic functions including contraction of smooth muscle of the gastrointestinal and genitourinary tract, growth hormone and insulin release and adrenal secretion. The polypeptide is Galanin peptides (GAL) (Coturnix japonica (Japanese quail)).